We begin with the raw amino-acid sequence, 160 residues long: Class II hydrophobin 8 (160 aa).

Intrachain disulfides connect Cys92/Cys141, Cys102/Cys132, Cys103/Cys115, and Cys142/Cys153.

This sequence belongs to the cerato-ulmin hydrophobin family. Homodimer. Homodimers further self-assemble to form highly ordered films at water-air interfaces through intermolecular interactions.

Its subcellular location is the secreted. The protein localises to the cell wall. Its function is as follows. Aerial growth, conidiation, and dispersal of filamentous fungi in the environment rely upon a capability of their secreting small amphipathic proteins called hydrophobins (HPBs) with low sequence identity. Class I can self-assemble into an outermost layer of rodlet bundles on aerial cell surfaces, conferring cellular hydrophobicity that supports fungal growth, development and dispersal; whereas Class II form highly ordered films at water-air interfaces through intermolecular interactions but contribute nothing to the rodlet structure. In Trichoderma asperellum (strain ATCC 204424 / CBS 433.97 / NBRC 101777), this protein is Class II hydrophobin 8.